Reading from the N-terminus, the 350-residue chain is Uroporphyrinogen decarboxylase (350 aa).

Substrate is bound by residues 28-32 (RQAGR), Asp78, Tyr155, Ser210, and His325.

Belongs to the uroporphyrinogen decarboxylase family. In terms of assembly, homodimer.

It localises to the cytoplasm. It catalyses the reaction uroporphyrinogen III + 4 H(+) = coproporphyrinogen III + 4 CO2. Its pathway is porphyrin-containing compound metabolism; protoporphyrin-IX biosynthesis; coproporphyrinogen-III from 5-aminolevulinate: step 4/4. Functionally, catalyzes the decarboxylation of four acetate groups of uroporphyrinogen-III to yield coproporphyrinogen-III. The sequence is that of Uroporphyrinogen decarboxylase from Picosynechococcus sp. (strain ATCC 27264 / PCC 7002 / PR-6) (Agmenellum quadruplicatum).